Here is a 239-residue protein sequence, read N- to C-terminus: Ribonuclease PH (239 aa).

Phosphate contacts are provided by residues Arg-87 and 125–127; that span reads GTR.

This sequence belongs to the RNase PH family. In terms of assembly, homohexameric ring arranged as a trimer of dimers.

The catalysed reaction is tRNA(n+1) + phosphate = tRNA(n) + a ribonucleoside 5'-diphosphate. Its function is as follows. Phosphorolytic 3'-5' exoribonuclease that plays an important role in tRNA 3'-end maturation. Removes nucleotide residues following the 3'-CCA terminus of tRNAs; can also add nucleotides to the ends of RNA molecules by using nucleoside diphosphates as substrates, but this may not be physiologically important. Probably plays a role in initiation of 16S rRNA degradation (leading to ribosome degradation) during starvation. In Azotobacter vinelandii (strain DJ / ATCC BAA-1303), this protein is Ribonuclease PH.